A 134-amino-acid chain; its full sequence is Loki profilin-1 (134 aa).

Residues 55-62 form a loki loop region; the sequence is LALGKKGI.

This sequence belongs to the Asgard profilin family.

The protein resides in the cytoplasm. It is found in the cytoskeleton. Its activity is regulated as follows. Inhibition of rabbit actin polymerization is reduced by phosphatidylinositol-(4,5)-P2(1,2-dipalmitoyl), a soluble form of the phospholipid phosphatidylinositol, suggesting an unknown lipid might regulate actin-profilin interaction in vivo. Functionally, binds to actin and affects the structure of the cytoskeleton. At high concentrations inhibits spontaneous rabbit actin nucleation. This strongly suggests this archaea has a profilin-regulated actin system, and actin-type genes can be identified in this organism. This Lokiarchaeum sp. (strain GC14_75) protein is Loki profilin-1.